A 296-amino-acid chain; its full sequence is Enoyl-CoA hydratase AFT3-1 (296 aa).

The short motif at 294–296 (PKL) is the Peroxisomal targeting signal type 1 element.

This sequence belongs to the enoyl-CoA hydratase/isomerase family.

Its subcellular location is the peroxisome. The catalysed reaction is a (3S)-3-hydroxyacyl-CoA = a (2E)-enoyl-CoA + H2O. The enzyme catalyses a 4-saturated-(3S)-3-hydroxyacyl-CoA = a (3E)-enoyl-CoA + H2O. It participates in mycotoxin biosynthesis. Functionally, enoyl-CoA hydratase; part of the gene clusters that mediate the biosynthesis of the host-selective toxins (HSTs) AF-toxins responsible for Alternaria black spot of strawberry disease by the strawberry pathotype. AF-toxin I and III are valine derivatives of 2,3-dyhydroxy-isovaleric acid and 2-hydroxy-isovaleric acid respectively, while AF II is an isoleucine derivative of 2-hydroxy-valeric acid. These derivatives are bound to a 9,10-epoxy-8-hydroxy-9-methyl-decatrienoic acid (EDA) moiety. On cellular level, AF-toxins affect plasma membrane of susceptible cells and cause a sudden increase in loss of K(+) after a few minutes of toxin treatment. The aldo-keto reductase AFTS1 catalyzes the conversion of 2-keto-isovaleric acid (2-KIV) to 2-hydroxy-isovaleric acid (2-HIV) by reduction of its ketone to an alcohol. The acyl-CoA ligase AFT1, the hydrolase AFT2 and the enoyl-CoA hydratases AFT3 and AFT6, but also the polyketide synthase AFT9, the acyl-CoA dehydrogenase AFT10, the cytochrome P450 monooxygenase AFT11 and the oxidoreductase AFT12 are all involved in the biosynthesis of the AK-, AF- and ACT-toxin common EDA structural moiety. The exact function of each enzyme, and of additional enzymes identified within the AF-toxin clusters have still to be determined. The chain is Enoyl-CoA hydratase AFT3-1 (AFT3-1) from Alternaria alternata (Alternaria rot fungus).